The following is a 554-amino-acid chain: MTSGPHNLEDPIVRAIRQKNQAPSHDFTIFVQEDGSSVSTLDRVVKNVQAPATYIPTDVEFFDINEPDKPDLHFLRNHFIREGRLSEEQTLYIIKKATEILKSEDNLIEVDAPVTVCGDIHGQYYDLMKLFEVGGNPANTQYLFLGDYVDRGYFSIECLLYLWALKIWYPKTLWLLRGNHECAHLTDYFTFKLECTHKYNIKVYEACLQSFNALPLAAIMNKQFLCVHGGLSPELHTLNDIRMINRFCEPPTHGLMCDLLWSDPLEDFGSEKSNKHFIHNNVRGCSYFYSYQAVCTFLENNNLLSVIRAHEAQDVGYRMYRKTKTTGFPSLMTIFSAPNYLDVYNNKAAVLKYENNVMNIRQFNCSPHPYWLPNFMDVFTWSLPFVGEKVSEMLISMLNICSKEELYETDLKESAPTQHKQPAPSENENKADQEIDIEARRQIIKNKIMAIGRISRVFSVLREERESVSELKNVSGTQRLPAGTLMLGAEGIKNAINSFDDARKLDIQNERLPPSNSRRRSTDLKAFEEVMNSSEDDTSIDHLVERFADKKSSL.

The Fe cation site is built by Asp119, His121, and Asp147. Residues Asp147 and Asn179 each contribute to the Zn(2+) site. The Proton donor role is filled by His180. Positions 228 and 310 each coordinate Zn(2+). The tract at residues 411–433 (LKESAPTQHKQPAPSENENKADQ) is disordered. Residues 415 to 426 (APTQHKQPAPSE) are compositionally biased toward polar residues.

Belongs to the PPP phosphatase family. PP-2B subfamily. As to quaternary structure, composed of two components (A and B), the A component is the catalytic subunit and the B component confers calcium sensitivity. Fe(3+) is required as a cofactor. The cofactor is Zn(2+).

It catalyses the reaction O-phospho-L-seryl-[protein] + H2O = L-seryl-[protein] + phosphate. The catalysed reaction is O-phospho-L-threonyl-[protein] + H2O = L-threonyl-[protein] + phosphate. Functionally, calcium-dependent, calmodulin-stimulated protein phosphatase. This subunit may have a role in the calmodulin activation of calcineurin. Appears to be involved in cytokinesis, mating, transport, nuclear and spindle pole body positioning, and cell shape. This is Serine/threonine-protein phosphatase 2B catalytic subunit (ppb1) from Schizosaccharomyces pombe (strain 972 / ATCC 24843) (Fission yeast).